A 654-amino-acid polypeptide reads, in one-letter code: Heat shock 70 kDa protein 2 (654 aa).

Residues 612–646 (AGGEGGAPGAGFPGAGGPGGFPGAGAGGAHSGGDD) are compositionally biased toward gly residues. A disordered region spans residues 612–654 (AGGEGGAPGAGFPGAGGPGGFPGAGAGGAHSGGDDGPTVEEVD).

The protein belongs to the heat shock protein 70 family.

In Paracoccidioides lutzii (strain ATCC MYA-826 / Pb01) (Paracoccidioides brasiliensis), this protein is Heat shock 70 kDa protein 2 (HSP70-2).